A 545-amino-acid chain; its full sequence is Putative transcription factor ecdB (545 aa).

The zn(2)-C6 fungal-type DNA-binding region spans 12–39 (CDACRSRRVKCDGQRPSCMGCLSRGLDC). Positions 79–99 (PPPVLLASARPSSNPLSSHED) are disordered.

The protein resides in the nucleus. This chain is Putative transcription factor ecdB, found in Aspergillus rugulosus (Emericella rugulosa).